The sequence spans 410 residues: Peptidase T (410 aa).

His-79 serves as a coordination point for Zn(2+). Asp-81 is a catalytic residue. Asp-142 lines the Zn(2+) pocket. The Proton acceptor role is filled by Glu-176. Zn(2+) is bound by residues Glu-177, Asp-199, and His-381.

The protein belongs to the peptidase M20B family. Requires Zn(2+) as cofactor.

It is found in the cytoplasm. It catalyses the reaction Release of the N-terminal residue from a tripeptide.. Cleaves the N-terminal amino acid of tripeptides. This Bacillus pumilus (strain SAFR-032) protein is Peptidase T.